The chain runs to 1116 residues: Protein STICHEL-like 1 (1116 aa).

Disordered regions lie at residues 95–138 (RTSS…LEET) and 225–244 (KFLR…NSTP). Positions 115–124 (NDDDDDDDDV) are enriched in acidic residues. 2 short sequence motifs (PEST) span residues 257–282 (RNPS…FKGR) and 402–422 (KSQD…ESIQ). 463–470 (GPRGTGKT) serves as a coordination point for ATP. 4 residues coordinate Zn(2+): cysteine 482, cysteine 492, cysteine 495, and cysteine 498. Positions 726 to 760 (EAFLDRRNLTEADLERLKHALKLLSEAEKQLRVST) form a coiled coil. A disordered region spans residues 777 to 798 (PSPGTTHTGSSRRQSSRATEES). Residues 778-793 (SPGTTHTGSSRRQSSR) show a composition bias toward polar residues.

It belongs to the DnaX/STICHEL family.

The polypeptide is Protein STICHEL-like 1 (Arabidopsis thaliana (Mouse-ear cress)).